A 201-amino-acid chain; its full sequence is MIKLVLFYFFSGLSLVSASIVISVKNPVFSVVFLILVFFNVVGLLLLLGAEFLSLLFLIVYVGAIAVLFLFVVMILNLKFIELRSSFFYYAFFGSLIMAIFLFEIFIILNSDLTFASSYFLERKRIWVQELYSYTNLQILGNVLYTSYSYLFILSGFVLLVAILGAIILTLYQRSQIRRQDPNVQVVRNFDDTIRFFKFLK.

The next 5 membrane-spanning stretches (helical) occupy residues 4–24 (LVLF…VISV), 28–48 (VFSV…LLLL), 55–75 (LLFL…VVMI), 88–108 (FYYA…IFII), and 151–171 (LFIL…ILTL).

Belongs to the complex I subunit 6 family.

It is found in the mitochondrion membrane. The catalysed reaction is a ubiquinone + NADH + 5 H(+)(in) = a ubiquinol + NAD(+) + 4 H(+)(out). Functionally, core subunit of the mitochondrial membrane respiratory chain NADH dehydrogenase (Complex I) that is believed to belong to the minimal assembly required for catalysis. Complex I functions in the transfer of electrons from NADH to the respiratory chain. The immediate electron acceptor for the enzyme is believed to be ubiquinone. The polypeptide is NADH-ubiquinone oxidoreductase chain 6 (ND6) (Cyanidium caldarium (Red alga)).